The following is a 199-amino-acid chain: uncharacterized protein (199 aa).

Residues 72 to 116 (EIYSEIENEESDIEEMSEEMKAFFAKTQEHRQKLKEQRAAEKRKE) adopt a coiled-coil conformation. A compositionally biased stretch (basic and acidic residues) spans 98-117 (TQEHRQKLKEQRAAEKRKEG). The tract at residues 98–127 (TQEHRQKLKEQRAAEKRKEGQSSSKSQEEY) is disordered.

This is an uncharacterized protein from Caenorhabditis elegans.